A 605-amino-acid chain; its full sequence is Elongation factor 4 (605 aa).

One can recognise a tr-type G domain in the interval 11 to 193 (KNIRNFSIIA…TLVDVIPAPT (183 aa)). Residues 23-28 (DHGKST) and 140-143 (NKID) contribute to the GTP site.

It belongs to the TRAFAC class translation factor GTPase superfamily. Classic translation factor GTPase family. LepA subfamily.

The protein localises to the cell inner membrane. It catalyses the reaction GTP + H2O = GDP + phosphate + H(+). Its function is as follows. Required for accurate and efficient protein synthesis under certain stress conditions. May act as a fidelity factor of the translation reaction, by catalyzing a one-codon backward translocation of tRNAs on improperly translocated ribosomes. Back-translocation proceeds from a post-translocation (POST) complex to a pre-translocation (PRE) complex, thus giving elongation factor G a second chance to translocate the tRNAs correctly. Binds to ribosomes in a GTP-dependent manner. The sequence is that of Elongation factor 4 from Acinetobacter baumannii (strain SDF).